Here is a 93-residue protein sequence, read N- to C-terminus: HssA/B-like protein 23 (93 aa).

The protein belongs to the hssA/B family.

The sequence is that of HssA/B-like protein 23 (hssl23) from Dictyostelium discoideum (Social amoeba).